A 1658-amino-acid chain; its full sequence is Cortactin-binding protein 2 (1658 aa).

Disordered regions lie at residues 1-24 (MATD…GATA), 203-235 (KTKT…SEFD), 348-437 (GAAL…LHPG), 451-475 (GNAN…SPTS), and 495-612 (RFTS…PPKP). Residues 119–276 (RKMQERMSTQ…EQLKRGNDSK (158 aa)) are a coiled coil. Over residues 214-235 (SAEKRRSTEMEAQMEKQLSEFD) the composition is skewed to basic and acidic residues. The segment covering 385–394 (GPSAGSASST) has biased composition (low complexity). A compositionally biased stretch (polar residues) spans 399 to 418 (NSTAPPTVQTPGIAPQSYSQ). Position 495 is an asymmetric dimethylarginine (Arg-495). A compositionally biased stretch (low complexity) spans 509–520 (AAPTGDGGTCPP). Residues 580 to 590 (TMASPPSSLPQ) are compositionally biased toward polar residues. ANK repeat units follow at residues 706–736 (GRPT…DINY), 740–769 (DGHS…QVNA), 773–802 (NGFT…NINH), 806–835 (EGQT…DRSV), 839–868 (DGWT…PACR), and 909–939 (EGWT…EPER). The segment at 1448 to 1478 (ESGAWRKVSTSPRKKSGRFSPPSWNKPGLSE) is disordered. Ser-1521 carries the phosphoserine modification. Disordered stretches follow at residues 1538–1595 (RSES…NSQS) and 1611–1642 (PRSK…NTKE). A compositionally biased stretch (basic and acidic residues) spans 1539–1558 (SESDISKIADSRDDLRRFDG). Polar residues-rich tracts occupy residues 1559-1569 (SRNNPAFSTVN) and 1581-1595 (PLSS…NSQS). Residues 1619 to 1633 (SQNTKRSSSSSNTRQ) are compositionally biased toward low complexity.

As to quaternary structure, interacts with CTTN/cortactin SH3 domain. Interacts with STRN, STRN4/zinedin and MOB4/phocein; this interactions mediate the association with the STRIPAK core complex and may regulate dendritic spine distribution of the STRIPAK complex in hippocampal neurons. Activation of glutamate receptors weakens the interaction with STRN and STRN4.

It localises to the cytoplasm. Its subcellular location is the cell cortex. The protein localises to the cell projection. It is found in the dendritic spine. Regulates the dendritic spine distribution of CTTN/cortactin in hippocampal neurons, and thus controls dendritic spinogenesis and dendritic spine maintenance. Associates with the striatin-interacting phosphatase and kinase (STRIPAK) core complex to regulate dendritic spine distribution of the STRIPAK complex in hippocampal neurons. In Neofelis nebulosa (Clouded leopard), this protein is Cortactin-binding protein 2 (CTTNBP2).